The primary structure comprises 327 residues: Aquaporin-1 (327 aa).

The segment at 1–34 (MSSNDSNDTDKQHTRLDPTGVDDAYIPPEQPETK) is disordered. Residues 1–48 (MSSNDSNDTDKQHTRLDPTGVDDAYIPPEQPETKHHRFKISKDTLRNH) lie on the Cytoplasmic side of the membrane. The helical transmembrane segment at 49 to 69 (FIAAAGEFCGTFMFLWCAYVI) threads the bilayer. Residues 70–91 (CNVANHDVALVAAPDGSHPGQL) lie on the Extracellular side of the membrane. The helical transmembrane segment at 92–112 (IMIAIGFGFSVMFSIWCFAGV) threads the bilayer. The Cytoplasmic segment spans residues 113–136 (SGGALNPAVSLSLCLARAVSPTRC). An NPA 1 motif is present at residues 118 to 120 (NPA). A helical membrane pass occupies residues 137–157 (VVMWVSQIVAGMAAGGAASAM). Over 158-176 (TPGEVLFANSLGLGCSRTR) the chain is Extracellular. A helical transmembrane segment spans residues 177–197 (GLFLEMFGTAILCLTVLMTAV). Over 198–203 (EKRETN) the chain is Cytoplasmic. Residues 204 to 224 (FMAALPIGISLFIAHVALTAY) form a helical membrane-spanning segment. Over 225-248 (TGTGVNPARSLGAAVAARYFPHYH) the chain is Extracellular. Residues 230–232 (NPA) carry the NPA 2 motif. A helical transmembrane segment spans residues 249-269 (WIYWIGPLLGSILAWSVWQLL). At 270–327 (QILDYTTYVTAEKAASTKEKAQKKVKPAVPLLWLKSNFSLLFFISRSLALNVIIFGKN) the chain is on the cytoplasmic side.

Belongs to the MIP/aquaporin (TC 1.A.8) family.

It is found in the endoplasmic reticulum membrane. Its subcellular location is the cell membrane. Water channel required to facilitate the transport of water across membranes. Involved in sporulation, freeze tolerance and osmotolerance. Is non-functional in most laboratory strains. This Saccharomyces cerevisiae (strain Lalvin EC1118 / Prise de mousse) (Baker's yeast) protein is Aquaporin-1 (AQY1).